Reading from the N-terminus, the 236-residue chain is uncharacterized protein (236 aa).

Its subcellular location is the virion. This is an uncharacterized protein from Acanthamoeba polyphaga (Amoeba).